A 239-amino-acid chain; its full sequence is Putative 3-methyladenine DNA glycosylase (239 aa).

This sequence belongs to the DNA glycosylase MPG family.

The polypeptide is Putative 3-methyladenine DNA glycosylase (Pseudomonas aeruginosa (strain UCBPP-PA14)).